A 339-amino-acid chain; its full sequence is Nitrilase 2 (339 aa).

Ser2 carries the post-translational modification N-acetylserine. The 273-residue stretch at 18–290 folds into the CN hydrolase domain; sequence VRATIVQAST…EGLITADLDL (273 aa). Glu58 serves as the catalytic Proton acceptor. Lys145 serves as the catalytic Proton donor. Catalysis depends on Cys179, which acts as the Nucleophile.

Belongs to the carbon-nitrogen hydrolase superfamily. Nitrilase family.

It is found in the cell membrane. It catalyses the reaction a nitrile + 2 H2O = a carboxylate + NH4(+). Can convert indole-3-acetonitrile to the plant hormone indole-3-acetic acid. The sequence is that of Nitrilase 2 (NIT2) from Arabidopsis thaliana (Mouse-ear cress).